The following is a 169-amino-acid chain: Non-specific lipid transfer protein GPI-anchored 11 (169 aa).

An N-terminal signal peptide occupies residues 1–23 (MAYATILMIFSVVALMSGERAHA). Disulfide bonds link Cys27–Cys70, Cys37–Cys54, Cys55–Cys95, and Cys68–Cys105. The GPI-anchor amidated serine moiety is linked to residue Ser146. The propeptide at 147–169 (SDASLLSVSFAFVIFMALISSFY) is removed in mature form.

It belongs to the plant LTP family. As to expression, expressed in a vascular-specific manner, mainly in roots, and, to a lower extent, in hypocotyls, seedlings stems and flowers.

The protein localises to the cell membrane. Its subcellular location is the secreted. Its function is as follows. Probable lipid transfer protein. Proteoglycan-like factor that exhibits xylogen activity consisting in mediating local and inductive cell-cell interactions required for xylem differentiation. The polypeptide is Non-specific lipid transfer protein GPI-anchored 11 (Arabidopsis thaliana (Mouse-ear cress)).